A 325-amino-acid polypeptide reads, in one-letter code: H-2 class I histocompatibility antigen, Q10 alpha chain (325 aa).

A signal peptide spans 1 to 24 (MGAMAPRTLLLLLAAALAPTQTQA). Positions 25 to 114 (GSHSMRYFET…LLGYYNQSES (90 aa)) are alpha-1. The Extracellular segment spans residues 25-310 (GSHSMRYFET…PPSTDSIMSH (286 aa)). Asparagine 110 carries an N-linked (GlcNAc...) asparagine glycan. Residues 115 to 206 (GSHTIQWMYG…ELGKETLLRT (92 aa)) are alpha-2. 2 disulfide bridges follow: cysteine 125/cysteine 188 and cysteine 227/cysteine 283. The interval 207-298 (DPPKTHVTHH…GLPEPLTLRW (92 aa)) is alpha-3. The region spanning 209 to 297 (PKTHVTHHPG…EGLPEPLTLR (89 aa)) is the Ig-like C1-type domain. Asparagine 280 carries an N-linked (GlcNAc...) asparagine glycan. A connecting peptide region spans residues 299–310 (EPPPSTDSIMSH). The chain crosses the membrane as a helical span at residues 311–324 (IADLLWPSLKLWWY).

It belongs to the MHC class I family. Heterodimer of an alpha chain and a beta chain (beta-2-microglobulin).

It is found in the membrane. Involved in the presentation of foreign antigens to the immune system. This is H-2 class I histocompatibility antigen, Q10 alpha chain (H2-Q10) from Mus musculus (Mouse).